Consider the following 308-residue polypeptide: UPF0282 protein SSO3251 (308 aa).

This sequence belongs to the UPF0282 family.

In Saccharolobus solfataricus (strain ATCC 35092 / DSM 1617 / JCM 11322 / P2) (Sulfolobus solfataricus), this protein is UPF0282 protein SSO3251.